Here is a 209-residue protein sequence, read N- to C-terminus: Glutathione S-transferase 1, isoform D (209 aa).

Residues 1–80 (MDFYYLPGSA…YLAEKYGKDD (80 aa)) form the GST N-terminal domain. Glutathione-binding positions include serine 9, 50–52 (HCI), and 64–66 (ESR). Residues 86–207 (DPQKRAVVNQ…AGADEFKAKF (122 aa)) form the GST C-terminal domain.

It belongs to the GST superfamily. Theta family. Homodimer.

The catalysed reaction is RX + glutathione = an S-substituted glutathione + a halide anion + H(+). The enzyme catalyses 1,1,1-trichloro-2,2-bis(4-chlorophenyl)ethane = 1,1-dichloro-2,2-bis(4-chlorophenyl)ethylene + chloride + H(+). Its activity is regulated as follows. Inhibited by S-hexylglutathione. Functionally, conjugation of reduced glutathione to a wide number of exogenous and endogenous hydrophobic electrophiles. Has DDT dehydrochlorinase activity. This is Glutathione S-transferase 1, isoform D (GstD1) from Anopheles gambiae (African malaria mosquito).